Consider the following 330-residue polypeptide: Protein pelota homolog (330 aa).

Belongs to the eukaryotic release factor 1 family. Pelota subfamily. Monomer. A divalent metal cation serves as cofactor.

It localises to the cytoplasm. Its function is as follows. May function in recognizing stalled ribosomes, interact with stem-loop structures in stalled mRNA molecules, and effect endonucleolytic cleavage of the mRNA. May play a role in the release non-functional ribosomes and degradation of damaged mRNAs. Has endoribonuclease activity. The polypeptide is Protein pelota homolog (Pyrobaculum neutrophilum (strain DSM 2338 / JCM 9278 / NBRC 100436 / V24Sta) (Thermoproteus neutrophilus)).